Consider the following 545-residue polypeptide: G-protein coupled receptor 161 (545 aa).

Residues 1-46 (MDFVQHALLTASRGALTMSLNSSLSYRKELSNLTATEGGEGGAVSE) are Extracellular-facing. N-linked (GlcNAc...) asparagine glycosylation is found at Asn21 and Asn32. A helical membrane pass occupies residues 47–67 (FIAIIIITVLVCLGNLVIVVT). Topologically, residues 68 to 80 (LYKKSYLLTLSNK) are cytoplasmic. The helical transmembrane segment at 81–101 (FVFSLTLSNFLLSVLVLPFVV) threads the bilayer. Residues 102–117 (TSSIRREWIFGVVWCN) lie on the Extracellular side of the membrane. A disulfide bridge links Cys116 with Cys194. The N-linked (GlcNAc...) asparagine glycan is linked to Asn117. A helical transmembrane segment spans residues 118–139 (FSALLYLLISSASMLTLGVIAI). At 140-159 (DRYYAVLYPMVYPMKITGNR) the chain is on the cytoplasmic side. Residues 160-180 (AVMALVYIWLHSLIGCLPPLF) form a helical membrane-spanning segment. Over 181–205 (GWSSVEFDEFKWMCVAAWHQEPGYT) the chain is Extracellular. A helical transmembrane segment spans residues 206–226 (IFWQIWCALFPFLIMLVCYGF). Residues 227–285 (IFRVARVKARKVHCGTVVTVEEDSQRSGRKNSSTSTSSSGSRRNALQGVVYSANQCKAL) lie on the Cytoplasmic side of the membrane. A helical transmembrane segment spans residues 286-306 (ITILVVIGAFMVTWGPYMVVI). The Extracellular portion of the chain corresponds to 307–322 (TSEALWGKNCVSPTLE). Residues 323–343 (TWATWLSFTSAICHPLIYGLW) form a helical membrane-spanning segment. The Cytoplasmic portion of the chain corresponds to 344–545 (NKTVRKELLG…EGNVLAAEQR (202 aa)).

The protein belongs to the G-protein coupled receptor 1 family.

The protein localises to the cell projection. Its subcellular location is the cilium membrane. It localises to the cell membrane. Its function is as follows. Key negative regulator of Shh signaling, which promotes the processing of GLI3 into GLI3R during neural tube development. Recruited by TULP3 and the IFT-A complex to primary cilia and acts as a regulator of the PKA-dependent basal repression machinery in Shh signaling by increasing cAMP levels, leading to promote the PKA-dependent processing of GLI3 into GLI3R and repress the Shh signaling. In presence of SHH, it is removed from primary cilia and is internalized into recycling endosomes, preventing its activity and allowing activation of the Shh signaling. Its ligand is unknown. This Mus musculus (Mouse) protein is G-protein coupled receptor 161 (Gpr161).